The following is a 520-amino-acid chain: Developmental regulatory protein wetA (520 aa).

3 stretches are compositionally biased toward polar residues: residues 109–118 (TATHALSISP), 155–165 (QSFSPSLMRSS), and 378–392 (SSQKFDTSYTSSQVH). Disordered stretches follow at residues 109–165 (TATH…MRSS), 378–454 (SSQK…SNKS), and 468–496 (KKILTGVAPSGSSKTKARREQEARDRRRK). Basic residues predominate over residues 420 to 429 (PTHRRTHSRK). A compositionally biased stretch (low complexity) spans 445 to 454 (SSSSRGSNKS).

Belongs to the wetA family.

Its function is as follows. BrlA, abaA and wetA are pivotal regulators of conidiophore development and conidium maturation. They act individually and together to regulate their own expression and that of numerous other sporulation-specific genes. The sequence is that of Developmental regulatory protein wetA from Penicillium roqueforti (strain FM164).